Here is a 505-residue protein sequence, read N- to C-terminus: MFS-type transporter oryN (505 aa).

Positions methionine 1–proline 54 are disordered. Transmembrane regions (helical) follow at residues alanine 69–phenylalanine 89, valine 106–glycine 126, lysine 135–alanine 155, phenylalanine 166–methionine 186, glycine 193–methionine 213, phenylalanine 226–leucine 246, glycine 280–proline 300, isoleucine 301–valine 321, isoleucine 337–valine 357, leucine 376–threonine 396, isoleucine 401–phenylalanine 421, isoleucine 440–phenylalanine 460, and alanine 468–phenylalanine 488.

This sequence belongs to the major facilitator superfamily. CAR1 family.

The protein resides in the membrane. Its function is as follows. MFS-type transporter; part of the gene cluster that mediates the biosynthesis of oryzines, natural products with an unusual maleidride backbone. The polypeptide is MFS-type transporter oryN (Aspergillus oryzae (strain ATCC 42149 / RIB 40) (Yellow koji mold)).